The following is a 342-amino-acid chain: Ribosomal RNA small subunit methyltransferase C (342 aa).

It belongs to the methyltransferase superfamily. RsmC family. Monomer.

The protein resides in the cytoplasm. It catalyses the reaction guanosine(1207) in 16S rRNA + S-adenosyl-L-methionine = N(2)-methylguanosine(1207) in 16S rRNA + S-adenosyl-L-homocysteine + H(+). In terms of biological role, specifically methylates the guanine in position 1207 of 16S rRNA in the 30S particle. The protein is Ribosomal RNA small subunit methyltransferase C of Shewanella sp. (strain MR-4).